Here is a 96-residue protein sequence, read N- to C-terminus: Large ribosomal subunit protein bL21 (96 aa).

Basic residues predominate over residues 73-84; sequence KRRKRYQSRNGH. A disordered region spans residues 73–96; it reads KRRKRYQSRNGHRQQMTQIEVVSL. The segment covering 85–96 has biased composition (polar residues); the sequence is RQQMTQIEVVSL.

This sequence belongs to the bacterial ribosomal protein bL21 family. As to quaternary structure, part of the 50S ribosomal subunit. Contacts protein L20.

Functionally, this protein binds to 23S rRNA in the presence of protein L20. This is Large ribosomal subunit protein bL21 from Chlorobium luteolum (strain DSM 273 / BCRC 81028 / 2530) (Pelodictyon luteolum).